The sequence spans 56 residues: Large ribosomal subunit protein bL32 (56 aa).

Residues 1–35 (MAVQQNKSTRSKRGMRRSHHALRSVTISVDRTSGE) are disordered. Positions 9–22 (TRSKRGMRRSHHAL) are enriched in basic residues.

Belongs to the bacterial ribosomal protein bL32 family.

This chain is Large ribosomal subunit protein bL32, found in Blochmanniella pennsylvanica (strain BPEN).